The chain runs to 705 residues: uncharacterized protein (705 aa).

Positions 24–52 form a DNA-binding region, zn(2)-C6 fungal-type; sequence CHFCRVRKLKCDRVRPFCGSCSSRNRKQC.

It is found in the nucleus. This is an uncharacterized protein from Saccharomyces cerevisiae (strain ATCC 204508 / S288c) (Baker's yeast).